The primary structure comprises 512 residues: MMVTLVLKYVLVIVMTLILRVLYDSICCYFLTPRRIKKFMERQGITGPKPRLLTGNIIDISKMLSHSASNDCSSIHHNIVPRLLPHYVSWSKQYGKRFIMWNGTEPRLCLTETEMIKELLTKHNPVTGKSWLQQQGTKGFIGRGLLMANGEAWHHQRHMAAPAFTRDRLKGYAKHMVECTKMMAERLRKEVGEEVEIGEEMRRLTADIISRTEFGSSCDKGKELFSLLTVLQRLCAQATRHLCFPGSRFLPSKYNREIKSLKTEVERLLMEIIDSRKDSVEIGRSSSYGDDLLGLLLNQMDSNKNNLNVQMIMDECKTFFFTGHETTSLLLTWTLMLLAHNPTWQDNVRDEVRQVCGQDGVPSVEQLSSLTSLNKVINESLRLYPPATLLPRMAFEDIKLGDLIIPKGLSIWIPVLAIHHSNELWGEDANEFNPERFTTRSFASSRHFMPFAAGPRNCIGQTFAMMEAKIILAMLVSKFSFAISENYRHAPIVVLTIKPKYGVQLVLKPLDL.

Residues Met-2 to Leu-22 traverse the membrane as a helical segment. Cys-458 serves as a coordination point for heme.

It belongs to the cytochrome P450 family. It depends on heme as a cofactor. As to expression, specifically expressed in roots.

The protein resides in the membrane. It catalyses the reaction N(6)-(dimethylallyl)adenosine 5'-phosphate + NADPH + O2 + H(+) = 9-ribosyl-trans-zeatin 5'-phosphate + NADP(+) + H2O. The enzyme catalyses N(6)-(dimethylallyl)adenosine 5'-diphosphate + NADPH + O2 + H(+) = 9-ribosyl-trans-zeatin 5'-diphosphate + NADP(+) + H2O. The catalysed reaction is N(6)-(dimethylallyl)adenosine 5'-triphosphate + NADPH + O2 + H(+) = 9-ribosyl-trans-zeatin 5'-triphosphate + NADP(+) + H2O. Functionally, cytokinin hydroxylase that catalyzes the biosynthesis of trans-zeatin via the isopentenyladenine riboside 5'-monophosphate (iPRMP)-dependent pathway. Can use isopentenyladenosine-5'-monophosphate, isopentenyladenosine-5'-diphosphate and isopentenyladenosine-5'-triphosphate as substrate. This Arabidopsis thaliana (Mouse-ear cress) protein is Cytokinin hydroxylase (CYP735A2).